Here is a 243-residue protein sequence, read N- to C-terminus: MGQKINPIGFRLGINRTWDSRWYADTAEYGKLLHEDLKIRAYLIKELKQAGIAKVVIERPHKKCRVTIHSARPGLIIGKKGADIEKLRKKLSEMTNSETHLNIVEVRKPEIDATLVAQSIAQQLERRVAFRRAMKRAVQSAMRLGAEGIKITCGGRLGGAEIARTEWYREGRVPLHTLRADIDYGTAEAETAFGICGIKVWIFKGEILEHDPMASERRGLEGDAQGPASRERGDRPDRRRENA.

One can recognise a KH type-2 domain in the interval 39–107; the sequence is IRAYLIKELK…ETHLNIVEVR (69 aa). The disordered stretch occupies residues 214–243; it reads ASERRGLEGDAQGPASRERGDRPDRRRENA. A compositionally biased stretch (basic and acidic residues) spans 229–243; the sequence is SRERGDRPDRRRENA.

The protein belongs to the universal ribosomal protein uS3 family. As to quaternary structure, part of the 30S ribosomal subunit. Forms a tight complex with proteins S10 and S14.

In terms of biological role, binds the lower part of the 30S subunit head. Binds mRNA in the 70S ribosome, positioning it for translation. This chain is Small ribosomal subunit protein uS3, found in Agrobacterium fabrum (strain C58 / ATCC 33970) (Agrobacterium tumefaciens (strain C58)).